Reading from the N-terminus, the 300-residue chain is Beta-lactamase (300 aa).

Residues M1–A29 form the signal peptide. S75 functions as the Acyl-ester intermediate in the catalytic mechanism. K239–G241 lines the substrate pocket.

It belongs to the class-A beta-lactamase family. In terms of assembly, monomer.

The enzyme catalyses a beta-lactam + H2O = a substituted beta-amino acid. Hydrolyzes broad-spectrum beta-lactam antibiotics. Active against cephalosporins such as cefuroxime and cefotaxime. In Proteus vulgaris, this protein is Beta-lactamase (blaB).